The primary structure comprises 172 residues: Adenine phosphoribosyltransferase (172 aa).

This sequence belongs to the purine/pyrimidine phosphoribosyltransferase family. In terms of assembly, homodimer.

The protein localises to the cytoplasm. It catalyses the reaction AMP + diphosphate = 5-phospho-alpha-D-ribose 1-diphosphate + adenine. It participates in purine metabolism; AMP biosynthesis via salvage pathway; AMP from adenine: step 1/1. Catalyzes a salvage reaction resulting in the formation of AMP, that is energically less costly than de novo synthesis. The protein is Adenine phosphoribosyltransferase of Malacoplasma penetrans (strain HF-2) (Mycoplasma penetrans).